A 257-amino-acid chain; its full sequence is Phycoerythrobilin:ferredoxin oxidoreductase (257 aa).

This sequence belongs to the HY2 family.

It catalyses the reaction (3Z)-phycoerythrobilin + oxidized 2[4Fe-4S]-[ferredoxin] = 15,16-dihydrobiliverdin + reduced 2[4Fe-4S]-[ferredoxin] + 2 H(+). In terms of biological role, catalyzes the two-electron reduction of the C2 and C3(1) diene system of 15,16-dihydrobiliverdin. The chain is Phycoerythrobilin:ferredoxin oxidoreductase from Prochlorococcus marinus (strain MIT 9303).